The primary structure comprises 153 residues: Holo-[acyl-carrier-protein] synthase (153 aa).

Mg(2+) is bound by residues D24 and E78.

This sequence belongs to the P-Pant transferase superfamily. AcpS family. The cofactor is Mg(2+).

The protein resides in the cytoplasm. It catalyses the reaction apo-[ACP] + CoA = holo-[ACP] + adenosine 3',5'-bisphosphate + H(+). Its function is as follows. Transfers the 4'-phosphopantetheine moiety from coenzyme A to a Ser of acyl-carrier-protein. The polypeptide is Holo-[acyl-carrier-protein] synthase (Bordetella parapertussis (strain 12822 / ATCC BAA-587 / NCTC 13253)).